The chain runs to 119 residues: Ribonuclease P protein component (119 aa).

The protein belongs to the RnpA family. Consists of a catalytic RNA component (M1 or rnpB) and a protein subunit.

The catalysed reaction is Endonucleolytic cleavage of RNA, removing 5'-extranucleotides from tRNA precursor.. Functionally, RNaseP catalyzes the removal of the 5'-leader sequence from pre-tRNA to produce the mature 5'-terminus. It can also cleave other RNA substrates such as 4.5S RNA. The protein component plays an auxiliary but essential role in vivo by binding to the 5'-leader sequence and broadening the substrate specificity of the ribozyme. This is Ribonuclease P protein component from Clostridium acetobutylicum (strain ATCC 824 / DSM 792 / JCM 1419 / IAM 19013 / LMG 5710 / NBRC 13948 / NRRL B-527 / VKM B-1787 / 2291 / W).